Here is a 303-residue protein sequence, read N- to C-terminus: tRNA pseudouridine synthase B (303 aa).

Aspartate 38 acts as the Nucleophile in catalysis.

It belongs to the pseudouridine synthase TruB family. Type 1 subfamily.

It catalyses the reaction uridine(55) in tRNA = pseudouridine(55) in tRNA. Its function is as follows. Responsible for synthesis of pseudouridine from uracil-55 in the psi GC loop of transfer RNAs. This Levilactobacillus brevis (strain ATCC 367 / BCRC 12310 / CIP 105137 / JCM 1170 / LMG 11437 / NCIMB 947 / NCTC 947) (Lactobacillus brevis) protein is tRNA pseudouridine synthase B.